A 260-amino-acid polypeptide reads, in one-letter code: 4-hydroxy-tetrahydrodipicolinate reductase (260 aa).

Residues 12–17, 92–94, and 118–121 contribute to the NAD(+) site; these read GFRGKM, GTT, and APNF. The Proton donor/acceptor role is filled by H148. H149 serves as a coordination point for (S)-2,3,4,5-tetrahydrodipicolinate. K152 (proton donor) is an active-site residue. 158-159 is a (S)-2,3,4,5-tetrahydrodipicolinate binding site; sequence GT.

It belongs to the DapB family.

The protein localises to the cytoplasm. It catalyses the reaction (S)-2,3,4,5-tetrahydrodipicolinate + NAD(+) + H2O = (2S,4S)-4-hydroxy-2,3,4,5-tetrahydrodipicolinate + NADH + H(+). It carries out the reaction (S)-2,3,4,5-tetrahydrodipicolinate + NADP(+) + H2O = (2S,4S)-4-hydroxy-2,3,4,5-tetrahydrodipicolinate + NADPH + H(+). The protein operates within amino-acid biosynthesis; L-lysine biosynthesis via DAP pathway; (S)-tetrahydrodipicolinate from L-aspartate: step 4/4. Catalyzes the conversion of 4-hydroxy-tetrahydrodipicolinate (HTPA) to tetrahydrodipicolinate. This chain is 4-hydroxy-tetrahydrodipicolinate reductase, found in Lactococcus lactis subsp. cremoris (strain MG1363).